The primary structure comprises 155 residues: Small ribosomal subunit protein uS7c (155 aa).

This sequence belongs to the universal ribosomal protein uS7 family. As to quaternary structure, part of the 30S ribosomal subunit.

It localises to the plastid. The protein localises to the chloroplast. Functionally, one of the primary rRNA binding proteins, it binds directly to 16S rRNA where it nucleates assembly of the head domain of the 30S subunit. This is Small ribosomal subunit protein uS7c (rps7) from Stewartia pseudocamellia (Japanese stewartia).